Consider the following 120-residue polypeptide: ESAT-6-like protein EsxQ (120 aa).

It belongs to the WXG100 family. ESAT-6 subfamily.

The protein resides in the secreted. This Mycobacterium bovis (strain ATCC BAA-935 / AF2122/97) protein is ESAT-6-like protein EsxQ.